A 238-amino-acid polypeptide reads, in one-letter code: SH2 domain-containing adapter protein F (238 aa).

Disordered stretches follow at residues 1 to 70 and 85 to 121; these read MEPY…PWEW and GSENCLSPGREEKGRLPPRLSAGNPKSAKPLGMEPSS. At Ser-39 the chain carries Phosphoserine. Residues 55 to 66 are compositionally biased toward acidic residues; it reads EDDERPPEEYDQ. The residue at position 64 (Tyr-64) is a Phosphotyrosine. Positions 138–233 constitute an SH2 domain; sequence WYHGAISRTD…AEHMSLLYPV (96 aa).

Interacts with phosphorylated 'Tyr-720' of PDGFRA via its SH2 domain. May become phosphorylated upon binding to PDGFRA.

Its function is as follows. Adapter protein which may play a role in the regulation of apoptosis in response to PDGF. The chain is SH2 domain-containing adapter protein F from Mus musculus (Mouse).